A 191-amino-acid chain; its full sequence is MKVILASASERRQELLKRIIDDFEIIVSDFDESTVKFNGDFSVYVQELAKGKAESVAKDIKEDAIVIGCDTIVAFNGKVLGKPKDETHAFNMLKALSGNVHSVYSGIAVLDTKNNNISTESVCTNVKFSTITNEKINKYISTKEPMDKAGAYGIQGLGGVFVEEINGDYYNVVGLPLNRLYKIFGDMGVNL.

Aspartate 70 functions as the Proton acceptor in the catalytic mechanism.

Belongs to the Maf family. YhdE subfamily. Requires a divalent metal cation as cofactor.

Its subcellular location is the cytoplasm. The catalysed reaction is dTTP + H2O = dTMP + diphosphate + H(+). It carries out the reaction UTP + H2O = UMP + diphosphate + H(+). Its function is as follows. Nucleoside triphosphate pyrophosphatase that hydrolyzes dTTP and UTP. May have a dual role in cell division arrest and in preventing the incorporation of modified nucleotides into cellular nucleic acids. The chain is dTTP/UTP pyrophosphatase from Clostridium novyi (strain NT).